Reading from the N-terminus, the 312-residue chain is Pyridoxal kinase (312 aa).

Position 1 is an N-acetylmethionine (methionine 1). The pyridoxal site is built by serine 12 and threonine 47. Threonine 47 provides a ligand contact to pyridoxal 5'-phosphate. Serine 59 is subject to Phosphoserine. Aspartate 113 contributes to the ATP binding site. Residue aspartate 113 coordinates Na(+). Aspartate 118 provides a ligand contact to Mg(2+). Residue threonine 148 participates in Na(+) binding. ATP is bound by residues asparagine 150–glutamate 153 and threonine 186–serine 187. Threonine 186 provides a ligand contact to Na(+). Phosphoserine is present on serine 213. ATP-binding positions include valine 226–alanine 228 and threonine 233. Glycine 234–aspartate 235 serves as a coordination point for pyridoxal 5'-phosphate. Residue aspartate 235 is the Proton acceptor of the active site. At serine 285 the chain carries Phosphoserine.

Belongs to the pyridoxine kinase family. In terms of assembly, homodimer. Zn(2+) serves as cofactor. The cofactor is Mg(2+).

The protein localises to the cytoplasm. The protein resides in the cytosol. It carries out the reaction pyridoxal + ATP = pyridoxal 5'-phosphate + ADP + H(+). The catalysed reaction is pyridoxamine + ATP = pyridoxamine 5'-phosphate + ADP + H(+). It catalyses the reaction pyridoxine + ATP = pyridoxine 5'-phosphate + ADP + H(+). The protein operates within cofactor metabolism; pyridoxal 5'-phosphate salvage; pyridoxal 5'-phosphate from pyridoxal: step 1/1. Its pathway is cofactor metabolism; pyridoxal 5'-phosphate salvage; pyridoxine 5'-phosphate from pyridoxine: step 1/1. It functions in the pathway cofactor metabolism; pyridoxal 5'-phosphate salvage; pyridoxamine 5'-phosphate from pyridoxamine: step 1/1. Activity is increased in the presence of K(+)or Na(+). Functionally, catalyzes the phosphorylation of the dietary vitamin B6 vitamers pyridoxal (PL), pyridoxine (PN) and pyridoxamine (PM) to form pyridoxal 5'-phosphate (PLP), pyridoxine 5'-phosphate (PNP) and pyridoxamine 5'-phosphate (PMP), respectively. PLP is the active form of vitamin B6, and acts as a cofactor for over 140 different enzymatic reactions. This Bos taurus (Bovine) protein is Pyridoxal kinase (PDXK).